The chain runs to 1096 residues: MGVQGFQEFLEKRCPGAVVPVDLLKLARTVSRQQQQQHLHRQLPPTAALAPGAPRAARGSVPLQPPLPPAALGAYSGGAGPTRHHHPAHHFHHHGQAQPGLHPPLPPPPPPQLPGARVLVDAGSALPRLYGGYQTDWVCGGQWNAMLGYLSALCQACAYPGGDGLELVVMFPGGLGKDRLAEWGRRCQAERQTAQLIVGHVGNKGTPPPRAWFLPPACLSHCVRLALIRFRVKVFQSLEDHHLEVVAFFRENGFHGLLAHDSEYALYNIPSYYSSHALKLSWNGKNLTTNQFLMQEVAKQLGLKRMNFPIFAALLGNHILPDEDLAAFHWSLLGPEHPLASLKVRAHQLVLPPCDVVIKAVSEYVSSIKDPSNLDVVGKDVFKQSQSRTEDKIERFKKAVEYYSVTTKLSSLPVGPSFLGFRNNRLGNPPLPRNQVGTISAGKPMFSHQVPQKVKYPPPFPVGPNSSLLFSSHALGESHAFSEDPMLQNSPFANWAVSYDSSASQFPNYLPSKASPPLGPDSSHSSSSDGDEPNGASSDHITEAFHHQPEWGNPNRDRGSWAQPVDTGVSEASLGDGEPHIPSLLSMSTRNHMDITIPPLPPVAPEVLRVAEHRHRRGLMYPYIYHVLTKGEIKIPVCIEDECNMELPPAALLFRSARQYVYGVLFSLAETQRKMERLAMRRRLPVEVPSVILKEWSAYKGKSPQTPELVSALTFREWTCPNLKKLWLGKAVEDKNRRMRAFLACMKSDTPSMLNPANVPTHLLLMCCVLRYMVQWPGGRILHRHELDTFLAQAVSTQLYEPDRLQELKIEKLDARGIQLAALFMSGVDTALFANDACGQPVPWEHCCPWIYFDGKLFQSKLIKAGRERVSLVELCDGQADLATKVEKMRQSILEGVNMNHPPPSALLPSPTFVPPMVPSLYPVSLYSRAMGSMPLPPQGRSRGFAGLHPIPPQGGKLEIAGMVVGQWAGSRSSRGRGSFGMQVVSVGGPGKGHGKEQTGRGSKGHKKGNKQGSSDGVSKSLELHQGRSRSQVNGNSGALIKEEKSDHRLPAPSQCALSRDSNECNNGNRYLPMNNREKNHLQEQKLETVAQRKED.

Residues 35–59 (QQQHLHRQLPPTAALAPGAPRAARG) are compositionally biased toward low complexity. Disordered stretches follow at residues 35-113 (QQQH…PPQL), 508-579 (NYLP…DGEP), and 971-1096 (SRSS…RKED). Arg-58 is modified (omega-N-methylarginine). Positions 82–95 (TRHHHPAHHFHHHG) are enriched in basic residues. The span at 101-113 (LHPPLPPPPPPQL) shows a compositional bias: pro residues. Over residues 540-559 (HITEAFHHQPEWGNPNRDRG) the composition is skewed to basic and acidic residues. Arg-977 is modified (omega-N-methylarginine). Basic and acidic residues-rich tracts occupy residues 1041–1050 (IKEEKSDHRL) and 1076–1096 (NREKNHLQEQKLETVAQRKED). Lys-1042 participates in a covalent cross-link: Glycyl lysine isopeptide (Lys-Gly) (interchain with G-Cter in SUMO2).

It belongs to the constitutive coactivator of PPAR-gamma family. Expressed at low levels in a number of tissues.

The protein is Constitutive coactivator of PPAR-gamma-like protein 2 (FAM120C) of Homo sapiens (Human).